Here is a 65-residue protein sequence, read N- to C-terminus: Large ribosomal subunit protein uL29 (65 aa).

The protein belongs to the universal ribosomal protein uL29 family.

The polypeptide is Large ribosomal subunit protein uL29 (Buchnera aphidicola subsp. Cinara cedri (strain Cc)).